The chain runs to 583 residues: Capsid vertex component 2 (583 aa).

Residues 1–49 form an interaction with major capsid protein/MCP region; it reads MANFIWDARILTGDGMEMFPADVKNFIAPPWPIEFWKEPVFTSNRANME.

This sequence belongs to the herpesviridae CVC2 protein family. Heterodimerizes with CVC1. Interacts with major capsid protein/MCP and triplex capsid protein 1/TRX1 at the pentamer vertices. Interacts with the large tegument protein/LTP.

It is found in the virion. It localises to the host nucleus. Its function is as follows. Capsid vertex-specific component that plays a role during viral DNA encapsidation, assuring correct genome cleavage and presumably stabilizing capsids that contain full-length viral genomes. Participates in the interaction between the capsid and the tegument through interaction with the large tegument protein/LTP. The protein is Capsid vertex component 2 of Gallus gallus (Chicken).